Consider the following 346-residue polypeptide: uncharacterized protein (346 aa).

Positions 1 to 28 are cleaved as a signal peptide; it reads MFEWMKNKKAISPILALLIVLGVTIVVG.

This is an uncharacterized protein from Methanocaldococcus jannaschii (strain ATCC 43067 / DSM 2661 / JAL-1 / JCM 10045 / NBRC 100440) (Methanococcus jannaschii).